Reading from the N-terminus, the 400-residue chain is Elongation factor Tu (400 aa).

The tr-type G domain maps to 10 to 209; sequence KEHVNIGTIG…QVDNWIDAPL (200 aa). A G1 region spans residues 19 to 26; sequence GHVDHGKT. 19–26 is a binding site for GTP; that stretch reads GHVDHGKT. Thr-26 is a binding site for Mg(2+). The G2 stretch occupies residues 61-65; that stretch reads GITIN. The G3 stretch occupies residues 82–85; that stretch reads DCPG. GTP contacts are provided by residues 82 to 86 and 137 to 140; these read DCPGH and NKVD. The segment at 137–140 is G4; the sequence is NKVD. A G5 region spans residues 179 to 181; that stretch reads SAL.

Belongs to the TRAFAC class translation factor GTPase superfamily. Classic translation factor GTPase family. EF-Tu/EF-1A subfamily. In terms of assembly, monomer.

Its subcellular location is the cytoplasm. The catalysed reaction is GTP + H2O = GDP + phosphate + H(+). Its function is as follows. GTP hydrolase that promotes the GTP-dependent binding of aminoacyl-tRNA to the A-site of ribosomes during protein biosynthesis. The chain is Elongation factor Tu from Mycoplasma mobile (strain ATCC 43663 / 163K / NCTC 11711) (Mesomycoplasma mobile).